Here is a 122-residue protein sequence, read N- to C-terminus: Urocortin (122 aa).

A signal peptide spans 1-25 (MRQRGRATLLVALLLLVQLRPESSQ). Residues 26-80 (WSPAAAAANVVQDPNLRWNPGVRNQGGGVRALLLLLAERFPRRAGSEPAGERQRR) constitute a propeptide that is removed on maturation. V120 bears the Valine amide mark.

This sequence belongs to the sauvagine/corticotropin-releasing factor/urotensin I family. Interacts with CRHR1 and CRHR2 (via their N-terminal extracellular domain).

It is found in the secreted. Acts in vitro to stimulate the secretion of adrenocorticotropic hormone (ACTH). Binds with high affinity to CRF receptor types 1, 2-alpha, and 2-beta. Plays a role in the establishment of normal hearing thresholds. Reduces food intake and regulates ghrelin levels in gastric body and plasma. This is Urocortin (Ucn) from Rattus norvegicus (Rat).